The chain runs to 219 residues: Transmembrane protein 247 (219 aa).

Composition is skewed to basic and acidic residues over residues 1–10 (MAAEDREMME) and 29–45 (SKSE…ESQK). The disordered stretch occupies residues 1–101 (MAAEDREMME…LPPTPGTERN (101 aa)). Residues 121 to 156 (LHEKNQRQRQHEVVMEQLQRERQHEVVMEQLQQEAA) are a coiled coil. Helical transmembrane passes span 167–187 (FLLP…IHII) and 194–214 (VFFL…LCLI).

The protein resides in the membrane. In Homo sapiens (Human), this protein is Transmembrane protein 247 (TMEM247).